Reading from the N-terminus, the 92-residue chain is Protein E7 (92 aa).

Residues 1–43 (MHGTRPSLADITLILEEIPEIIDLHCDEQFDSSEEENNHQLTE) form an E7 terminal domain region. Positions 24-28 (LHCDE) match the LXCXE motif; interaction with host RB1 and TMEM173/STING motif. Residues 55–91 (CCKCGRAVRLVVECGPEDIRDLEQLFLKTLNLVCPHC) fold into a zinc finger. A Nuclear export signal motif is present at residues 73–81 (IRDLEQLFL).

Belongs to the papillomaviridae E7 protein family. Homodimer. Homooligomer. Interacts with host RB1; this interaction induces dissociation of RB1-E2F1 complex thereby disrupting RB1 activity. Interacts with host EP300; this interaction represses EP300 transcriptional activity. Interacts with protein E2; this interaction inhibits E7 oncogenic activity. Interacts with host TMEM173/STING; this interaction impairs the ability of TMEM173/STING to sense cytosolic DNA and promote the production of type I interferon (IFN-alpha and IFN-beta). Highly phosphorylated.

The protein resides in the host cytoplasm. It is found in the host nucleus. Functionally, plays a role in viral genome replication by driving entry of quiescent cells into the cell cycle. Stimulation of progression from G1 to S phase allows the virus to efficiently use the cellular DNA replicating machinery to achieve viral genome replication. E7 protein has both transforming and trans-activating activities. Induces the disassembly of the E2F1 transcription factor from RB1, with subsequent transcriptional activation of E2F1-regulated S-phase genes. Interferes with host histone deacetylation mediated by HDAC1 and HDAC2, leading to transcription activation. Also plays a role in the inhibition of both antiviral and antiproliferative functions of host interferon alpha. Interaction with host TMEM173/STING impairs the ability of TMEM173/STING to sense cytosolic DNA and promote the production of type I interferon (IFN-alpha and IFN-beta). The protein is Protein E7 of Homo sapiens (Human).